We begin with the raw amino-acid sequence, 346 residues long: 4-hydroxy-2-oxovalerate aldolase 2 (346 aa).

The Pyruvate carboxyltransferase domain maps to 8 to 260 (VTVHDMTLRD…ETGVDVFKIQ (253 aa)). 16–17 (RD) contacts substrate. Asp-17 contacts Mn(2+). His-20 functions as the Proton acceptor in the catalytic mechanism. Substrate-binding residues include Ser-170 and His-199. Residues His-199 and His-201 each coordinate Mn(2+). Substrate is bound at residue Tyr-290.

Belongs to the 4-hydroxy-2-oxovalerate aldolase family.

It carries out the reaction (S)-4-hydroxy-2-oxopentanoate = acetaldehyde + pyruvate. This chain is 4-hydroxy-2-oxovalerate aldolase 2 (bphX3), found in Metapseudomonas furukawaii (Pseudomonas furukawaii).